Reading from the N-terminus, the 691-residue chain is MARAFPLERVRNIGIAAHIDAGKTTCTERILFYSGVVHKMGEVHDGAAVTDWMAQERERGITITAAAISTTWNDHRINIIDTPGHVDFTIEVERSMRVLDGVIAVFCAVGGVQPQSETVWRQADRYSVPRMVFVNKMDRTGADFLKVHGQIKNRLKANAIPIQLPIGAEGDLSGIIDLVKNKAFIYKDDLGKEIEETEIPDHMKEIAAEWRSKLMECVAETDEELIEVFLETEELSEAQLASGIREGVLNHGLVPLLCGSAFKNKGVQLLLDAVVDYLPAPVDVPPIQGLLPNGKEAVRPSDDNAPFSALAFKVMSDPYGKLTFVRMYSGVLEKGSYVLNSTKNEKERISRLIILKADDREEVDALRAGDLGAVLGLKNTTTGDTLCTTDDPIVLETLYIPEPVISVAVEPKTKGDMEKLSKALLSLAEEDPTFRVSTDPETSQTVIAGMGELHLEILVDRMLREFKVEANIGAPQVSYRETIRASSKGEGKFARQTGGKGQYGHVVIEMEPGEPGSGFEFVNKIVGGIVPKEYIKPAESGMRETCESGVIAGYPLIDVKVTMVDGSYHDVDSSEMAFKIAGSMAFKDGVKKCNPVLLEPMMKVEVEIPEDFLGAIIGDLSSRRGQVEGQSIDDGLSKVQSKVPLAEMFGYATQLRSMTQGRGIFSMEFSHYEEVPRNVAEAIISKNQGNS.

The tr-type G domain occupies E8–V282. GTP contacts are provided by residues A17 to T24, D81 to H85, and N135 to D138.

The protein belongs to the TRAFAC class translation factor GTPase superfamily. Classic translation factor GTPase family. EF-G/EF-2 subfamily.

It localises to the cytoplasm. Catalyzes the GTP-dependent ribosomal translocation step during translation elongation. During this step, the ribosome changes from the pre-translocational (PRE) to the post-translocational (POST) state as the newly formed A-site-bound peptidyl-tRNA and P-site-bound deacylated tRNA move to the P and E sites, respectively. Catalyzes the coordinated movement of the two tRNA molecules, the mRNA and conformational changes in the ribosome. This Prochlorococcus marinus (strain MIT 9313) protein is Elongation factor G.